A 459-amino-acid chain; its full sequence is Cysteine desulfurase (459 aa).

A mitochondrion-targeting transit peptide spans 1-17 (MVGSVAGNMLLRAAWRR). Pyridoxal 5'-phosphate-binding residues include alanine 129, threonine 130, glutamine 237, serine 257, and histidine 259. Position 260 is an N6-(pyridoxal phosphate)lysine (lysine 260). Threonine 297 contributes to the pyridoxal 5'-phosphate binding site. Cysteine 383 functions as the Cysteine persulfide intermediate in the catalytic mechanism. [2Fe-2S] cluster is bound at residue cysteine 383. Residue cysteine 383 coordinates Zn(2+). Cysteine 383 carries the cysteine persulfide modification.

Belongs to the class-V pyridoxal-phosphate-dependent aminotransferase family. NifS/IscS subfamily. Homodimer. Component of the mitochondrial core iron-sulfur cluster (ISC) complex composed of NFS1, LYRM4, NDUFAB1, ISCU, FXN, and FDX2; this complex is a heterohexamer containing two copies of each monomer. Component of cyteine desulfurase complex composed of NFS1, LYRM4 and NDUFAB1; this complex contributes to the activation of cysteine desulfurase activity and NFS1 stabilization. Interacts (homodimer form) with ISCU (D-state); each monomer interacts with the C-terminal regions of each NFS1 monomer. Interacts with HSPA9. Interacts (via homodimer form) with FDX2. Interacts (via homodimer form) with FXN. Interacts with LYRM4. Component of a complex composed of FXN, NFS1, LYRM4 and ISCU. It depends on pyridoxal 5'-phosphate as a cofactor. Post-translationally, N-gluconoylated. In terms of processing, cysteine persulfide intermediate is reduced by thiol-containing molecules like glutathione and L-cysteine. Persulfide reduction is a rate-limiting step of cysteine desulfurase catalytic cycle. In terms of tissue distribution, ubiquitous.

It is found in the mitochondrion. It carries out the reaction (sulfur carrier)-H + L-cysteine = (sulfur carrier)-SH + L-alanine. It catalyses the reaction L-cysteinyl-[cysteine desulfurase] + L-cysteine = S-sulfanyl-L-cysteinyl-[cysteine desulfurase] + L-alanine. With respect to regulation, active only in complex with LYRM4. Its function is as follows. Mitochondrial cysteine desulfurase, of the core iron-sulfur cluster (ISC) assembly complex, that catalyzes the desulfuration of L-cysteine to L-alanine, as component of the cysteine desulfurase complex, leading to the formation of a cysteine persulfide intermediate at the active site cysteine residue and participates in the [2Fe-2S] clusters assembly on the scaffolding protein ISCU. The persulfide is then transferred on the flexible Cys loop from the catalytic site of NFS1 to the surface of NFS1. After the NFS1-linked persulfide sulfur is transferred to one of the conserved Cys residues of the scaffold, a reaction assisted by FXN. The core iron-sulfur cluster (ISC) assembly complex is involved in the de novo synthesis of a [2Fe-2S] cluster, the first step of the mitochondrial iron-sulfur protein biogenesis. This process is initiated by the cysteine desulfurase complex (NFS1:LYRM4:NDUFAB1) that produces persulfide which is delivered on the scaffold protein ISCU in a FXN-dependent manner. Then this complex is stabilized by FDX2 which provides reducing equivalents to accomplish the [2Fe-2S] cluster assembly. Finally, the [2Fe-2S] cluster is transferred from ISCU to chaperone proteins, including HSCB, HSPA9 and GLRX5. This chain is Cysteine desulfurase, found in Mus musculus (Mouse).